The chain runs to 448 residues: Cytoplasmic tRNA 2-thiolation protein 2 (448 aa).

It belongs to the CTU2/NCS2 family.

The protein localises to the cytoplasm. It functions in the pathway tRNA modification; 5-methoxycarbonylmethyl-2-thiouridine-tRNA biosynthesis. Plays a central role in 2-thiolation of mcm(5)S(2)U at tRNA wobble positions of tRNA(Lys), tRNA(Glu) and tRNA(Gln). May act by forming a heterodimer with NCS6 that ligates sulfur from thiocarboxylated URM1 onto the uridine of tRNAs at wobble position. Prior mcm(5) tRNA modification by the elongator complex is required for 2-thiolation. May also be involved in protein urmylation. This chain is Cytoplasmic tRNA 2-thiolation protein 2, found in Lodderomyces elongisporus (strain ATCC 11503 / CBS 2605 / JCM 1781 / NBRC 1676 / NRRL YB-4239) (Yeast).